Reading from the N-terminus, the 284-residue chain is 2-dehydro-3-deoxyphosphooctonate aldolase (284 aa).

Belongs to the KdsA family.

It localises to the cytoplasm. It carries out the reaction D-arabinose 5-phosphate + phosphoenolpyruvate + H2O = 3-deoxy-alpha-D-manno-2-octulosonate-8-phosphate + phosphate. It participates in carbohydrate biosynthesis; 3-deoxy-D-manno-octulosonate biosynthesis; 3-deoxy-D-manno-octulosonate from D-ribulose 5-phosphate: step 2/3. The protein operates within bacterial outer membrane biogenesis; lipopolysaccharide biosynthesis. The polypeptide is 2-dehydro-3-deoxyphosphooctonate aldolase (Synechococcus sp. (strain ATCC 27144 / PCC 6301 / SAUG 1402/1) (Anacystis nidulans)).